Reading from the N-terminus, the 137-residue chain is Nucleoside diphosphate kinase (137 aa).

The ATP site is built by lysine 9, phenylalanine 57, arginine 85, threonine 91, arginine 102, and asparagine 112. The active-site Pros-phosphohistidine intermediate is the histidine 115.

It belongs to the NDK family. In terms of assembly, homotetramer. Mg(2+) serves as cofactor.

It is found in the cytoplasm. It carries out the reaction a 2'-deoxyribonucleoside 5'-diphosphate + ATP = a 2'-deoxyribonucleoside 5'-triphosphate + ADP. The catalysed reaction is a ribonucleoside 5'-diphosphate + ATP = a ribonucleoside 5'-triphosphate + ADP. Its function is as follows. Major role in the synthesis of nucleoside triphosphates other than ATP. The ATP gamma phosphate is transferred to the NDP beta phosphate via a ping-pong mechanism, using a phosphorylated active-site intermediate. The protein is Nucleoside diphosphate kinase of Pelobacter propionicus (strain DSM 2379 / NBRC 103807 / OttBd1).